The chain runs to 675 residues: Polyphosphate kinase (675 aa).

N42 lines the ATP pocket. The Mg(2+) site is built by R372 and R401. H431 (phosphohistidine intermediate) is an active-site residue. The ATP site is built by Y464, R558, and H586.

Belongs to the polyphosphate kinase 1 (PPK1) family. Mg(2+) is required as a cofactor. An intermediate of this reaction is the autophosphorylated ppk in which a phosphate is covalently linked to a histidine residue through a N-P bond.

The enzyme catalyses [phosphate](n) + ATP = [phosphate](n+1) + ADP. Functionally, catalyzes the reversible transfer of the terminal phosphate of ATP to form a long-chain polyphosphate (polyP). This chain is Polyphosphate kinase, found in Helicobacter pylori (strain ATCC 700392 / 26695) (Campylobacter pylori).